The chain runs to 340 residues: Guanine nucleotide-binding protein G(I)/G(S)/G(T) subunit beta-1 (340 aa).

The residue at position 2 (Ser2) is an N-acetylserine. Ser2 carries the post-translational modification Phosphoserine. WD repeat units lie at residues 46-94 (RTRR…HAIP), 95-140 (LRSS…RELA), 141-181 (GHTG…TTFT), 182-223 (GHTG…QTFT), 224-267 (GHES…YSHD), 268-309 (NIIC…GVLA), and 310-340 (GHDNRVSCLGVTDDGMAVATGSWDSFLKIWN). A Phosphohistidine modification is found at His266.

This sequence belongs to the WD repeat G protein beta family. As to quaternary structure, g proteins are composed of 3 units, alpha, beta and gamma. The heterodimer formed by GNB1 and GNG2 interacts with ARHGEF5. The heterodimer formed by GNB1 and GNG2 interacts with GRK2. Forms a complex with GNAO1 and GNG3. Interacts with ARHGEF18 and RASD2. Forms complexes with TAS2R14 and G-proteins; these complexes play a role in the perception of bitterness. Component of the TAS2R14-GNAI1 complex, consisting of TAS2R14, GNAI1, GNB1 and GNG2. Component of the TAS2R14-GNAT3 complex, consisting of TAS2R14, GNAT3, GNB1 and GNG2. Component of the TAS2R14-GNAS2 complex, consisting of TAS2R14, GNAS2, GNB1 and GNG2. In terms of processing, phosphorylation at His-266 by NDKB contributes to G protein activation by increasing the high energetic phosphate transfer onto GDP.

Guanine nucleotide-binding proteins (G proteins) are involved as a modulator or transducer in various transmembrane signaling systems. The beta and gamma chains are required for the GTPase activity, for replacement of GDP by GTP, and for G protein-effector interaction. This is Guanine nucleotide-binding protein G(I)/G(S)/G(T) subunit beta-1 (GNB1) from Bos taurus (Bovine).